Here is a 60-residue protein sequence, read N- to C-terminus: Cytotoxin SP15c (60 aa).

4 cysteine pairs are disulfide-bonded: Cys-3–Cys-21, Cys-14–Cys-38, Cys-42–Cys-53, and Cys-54–Cys-59.

It belongs to the three-finger toxin family. Short-chain subfamily. Type IA cytotoxin sub-subfamily. Monomer in solution; Homodimer and oligomer in the presence of negatively charged lipids forming a pore with a size ranging between 20 and 30 Angstroms. As to expression, expressed by the venom gland.

The protein localises to the secreted. It is found in the target cell membrane. Its function is as follows. Shows cytolytic activity on many different cells by forming pore in lipid membranes. In vivo, increases heart rate or kills the animal by cardiac arrest. In addition, it binds to heparin with high affinity, interacts with Kv channel-interacting protein 1 (KCNIP1) in a calcium-independent manner, and binds to integrin alpha-V/beta-3 (ITGAV/ITGB3) with moderate affinity. The chain is Cytotoxin SP15c from Naja atra (Chinese cobra).